Consider the following 1453-residue polypeptide: Spike glycoprotein (1453 aa).

The signal sequence occupies residues 1–31 (MIVLILCLLLFSYNSVICTSNNDCVQGNVTQ). 2 S1 regions span residues 19–791 (TSNN…ERTR) and 32–780 (LPGN…FYYY). The Virion surface portion of the chain corresponds to 32–1394 (LPGNENIIKD…NRIETYVKWP (1363 aa)). An interaction with host ANPEP region spans residues 661–805 (VIYEEGDNIV…DSNDVDCEPI (145 aa)). S2 stretches follow at residues 781–1453 (SIYN…VHVH) and 794–1453 (AIDS…VHVH). The interval 1026–1047 (AGGITLGSLGGGAVSIPFAIAV) is fusion peptide. The tract at residues 1041–1160 (IPFAIAVQAR…QVDRLITGRL (120 aa)) is heptad repeat 1 (HR1). Coiled coils occupy residues 1108–1152 (QDVV…DAQV) and 1342–1384 (TYLN…LEWL). Residues 1309–1406 (PDYIDINQTV…VWLLIGLVVI (98 aa)) form a heptad repeat 2 (HR2) region. The chain crosses the membrane as a helical span at residues 1395 to 1414 (WYVWLLIGLVVIFCIPILLF). Residues 1415 to 1453 (CCCSTGCCGCIGCLGSCCHSICSRRQFESYEPIEKVHVH) are Intravirion-facing. Residues 1449 to 1453 (KVHVH) carry the KxHxx motif.

It belongs to the alphacoronaviruses spike protein family. Homotrimer. During virus morphogenesis, found in a complex with M and HE proteins. Interacts with host ANPEP.

The protein resides in the virion membrane. The protein localises to the host endoplasmic reticulum-Golgi intermediate compartment membrane. In terms of biological role, S1 region attaches the virion to the cell membrane by interacting with host ANPEP/aminopeptidase N, initiating the infection. Binding to the receptor probably induces conformational changes in the S glycoprotein unmasking the fusion peptide of S2 region and activating membranes fusion. S2 region belongs to the class I viral fusion protein. Under the current model, the protein has at least 3 conformational states: pre-fusion native state, pre-hairpin intermediate state, and post-fusion hairpin state. During viral and target cell membrane fusion, the coiled coil regions (heptad repeats) regions assume a trimer-of-hairpins structure, positioning the fusion peptide in close proximity to the C-terminal region of the ectodomain. The formation of this structure appears to drive apposition and subsequent fusion of viral and target cell membranes. This chain is Spike glycoprotein, found in Canis lupus familiaris (Dog).